Consider the following 20-residue polypeptide: Equinatoxin-1 (20 aa).

A plays an important role in the hemolytic activity region spans residues 3 to 12 (AVAGAVIEGA). The segment at 11–20 (GASLTFNVLQ) is N-terminal region.

Belongs to the actinoporin family. Sea anemone subfamily. As to quaternary structure, octamer or nonamer in membranes. Monomer in the soluble state.

The protein resides in the secreted. It is found in the nematocyst. It localises to the target cell membrane. In terms of biological role, pore-forming protein that forms cations-selective hydrophilic pores of around 1 nm and causes cardiac stimulation and cytolysis. Pore formation is a multi-step process that involves specific recognition of membrane sphingomyelin (but neither cholesterol nor phosphatidylcholine) using aromatic rich region and adjacent phosphocholine (POC) binding site, firm binding to the membrane (mainly driven by hydrophobic interactions) accompanied by the transfer of the N-terminal region to the lipid-water interface and finally pore formation after oligomerization of monomers. Cytolytic effects include red blood cells hemolysis, platelet aggregation and lysis, cytotoxic and cytostatic effects on fibroblasts. Lethality in mammals has been ascribed to severe vasospasm of coronary vessels, cardiac arrhythmia, and inotropic effects. This Actinia equina (Beadlet anemone) protein is Equinatoxin-1.